We begin with the raw amino-acid sequence, 285 residues long: HTH-type transcriptional regulator MurR (285 aa).

Residues 1 to 77 form the HTH rpiR-type domain; sequence MLYLTKISNA…MALIGEYSAS (77 aa). The H-T-H motif DNA-binding region spans 37-56; it reads SRQMAKQLGISQSSIVKFAQ. Residues 128-268 enclose the SIS domain; the sequence is IIEVISKAPF…FVGLVQLNDV (141 aa).

In terms of assembly, homotetramer.

It functions in the pathway amino-sugar metabolism; N-acetylmuramate degradation [regulation]. Functionally, represses the expression of the murPQ operon involved in the uptake and degradation of N-acetylmuramic acid (MurNAc). Binds to two adjacent inverted repeats within the operator region. MurNAc 6-phosphate, the substrate of MurQ, is the specific inducer that weakens binding of MurR to the operator. In Escherichia coli O139:H28 (strain E24377A / ETEC), this protein is HTH-type transcriptional regulator MurR.